A 201-amino-acid polypeptide reads, in one-letter code: Fas apoptotic inhibitory molecule 1 (201 aa).

Belongs to the FAIM1 family.

Its subcellular location is the cytoplasm. Functionally, plays a role as an inducible effector molecule that mediates Fas resistance produced by surface Ig engagement in B cells. The protein is Fas apoptotic inhibitory molecule 1 (Faim) of Rattus norvegicus (Rat).